A 732-amino-acid chain; its full sequence is Exonuclease 1 (732 aa).

Residues 1–99 (MGITGLIPFV…KRRRDSRKQS (99 aa)) form an N-domain region. Mg(2+) contacts are provided by aspartate 30, aspartate 78, glutamate 150, aspartate 152, aspartate 171, aspartate 173, and aspartate 226. Residues 138 to 230 (RSRNVDCIVA…ILSGCDYLDS (93 aa)) are I-domain. Disordered stretches follow at residues 422–471 (YSFK…QRSP), 524–625 (DEQT…TNST), and 661–716 (SCSS…VSQN). A phosphoserine mark is found at serine 431 and serine 433. A compositionally biased stretch (basic and acidic residues) spans 432–442 (PSREDSVDQER). Threonine 443 is subject to Phosphothreonine. Serine 447 carries the phosphoserine modification. Composition is skewed to basic and acidic residues over residues 457–467 (FAKERTGEEAN) and 525–537 (EQTR…LRDT). Composition is skewed to polar residues over residues 572–593 (RCSS…SLLE) and 608–625 (DLNN…TNST). The segment covering 661 to 677 (SCSSDQRASSTSSSSQQ) has biased composition (low complexity). Positions 703-716 (KSRTNGKLGAVSQN) are enriched in polar residues.

The protein belongs to the XPG/RAD2 endonuclease family. EXO1 subfamily. The cofactor is Mg(2+). In terms of tissue distribution, specifically expressed in the female germline.

It is found in the nucleus. 5'-&gt;3' double-stranded DNA exonuclease which may also contain a cryptic 3'-&gt;5' double-stranded DNA exonuclease activity. Also exhibits endonuclease activity against 5'-overhanging flap structures similar to those generated by displacement synthesis when DNA polymerase encounters the 5'-end of a downstream Okazaki fragment. Required for DNA mismatch repair (MMR). The sequence is that of Exonuclease 1 (tos) from Drosophila melanogaster (Fruit fly).